Reading from the N-terminus, the 119-residue chain is MYVRFEVPEDMQNEALSLLEKVRESGKVKKGTNETTKAVERGLAKLVYIAEDVDPPEIVAHLPLLCEEKNVPYIYVKSKNDLGRAVGIEVPCASAAIINEGELRKELGSLVEKIKGLQK.

It belongs to the eukaryotic ribosomal protein eL8 family. As to quaternary structure, part of the 50S ribosomal subunit. Probably part of the RNase P complex.

The protein localises to the cytoplasm. Functionally, multifunctional RNA-binding protein that recognizes the K-turn motif in ribosomal RNA, the RNA component of RNase P, box H/ACA, box C/D and box C'/D' sRNAs. The protein is Large ribosomal subunit protein eL8 of Archaeoglobus fulgidus (strain ATCC 49558 / DSM 4304 / JCM 9628 / NBRC 100126 / VC-16).